Reading from the N-terminus, the 117-residue chain is Immunoglobulin heavy variable 1-24 (117 aa).

An N-terminal signal peptide occupies residues 1–19 (MDCTWRILFLVAAATGTHA). Positions 20–44 (QVQLVQSGAEVKKPGASVKVSCKVS) are framework-1. Residues 20-117 (QVQLVQSGAE…EDTAVYYCAT (98 aa)) form the Ig-like domain. Cysteine 41 and cysteine 115 are disulfide-bonded. The tract at residues 45-52 (GYTLTELS) is complementarity-determining-1. Residues 53-69 (MHWVRQAPGKGLEWMGG) form a framework-2 region. The segment at 70 to 77 (FDPEDGET) is complementarity-determining-2. Positions 78 to 115 (IYAQKFQGRVTMTEDTSTDTAYMELSSLRSEDTAVYYC) are framework-3. The interval 116–117 (AT) is complementarity-determining-3.

As to quaternary structure, immunoglobulins are composed of two identical heavy chains and two identical light chains; disulfide-linked.

It localises to the secreted. Its subcellular location is the cell membrane. Its function is as follows. V region of the variable domain of immunoglobulin heavy chains that participates in the antigen recognition. Immunoglobulins, also known as antibodies, are membrane-bound or secreted glycoproteins produced by B lymphocytes. In the recognition phase of humoral immunity, the membrane-bound immunoglobulins serve as receptors which, upon binding of a specific antigen, trigger the clonal expansion and differentiation of B lymphocytes into immunoglobulins-secreting plasma cells. Secreted immunoglobulins mediate the effector phase of humoral immunity, which results in the elimination of bound antigens. The antigen binding site is formed by the variable domain of one heavy chain, together with that of its associated light chain. Thus, each immunoglobulin has two antigen binding sites with remarkable affinity for a particular antigen. The variable domains are assembled by a process called V-(D)-J rearrangement and can then be subjected to somatic hypermutations which, after exposure to antigen and selection, allow affinity maturation for a particular antigen. In Homo sapiens (Human), this protein is Immunoglobulin heavy variable 1-24.